A 339-amino-acid chain; its full sequence is Putative phosphate acyltransferase (339 aa).

It belongs to the PlsX family. Homodimer. Probably interacts with PlsY.

It localises to the cytoplasm. It catalyses the reaction a fatty acyl-[ACP] + phosphate = an acyl phosphate + holo-[ACP]. Its pathway is lipid metabolism; phospholipid metabolism. In terms of biological role, catalyzes the reversible formation of acyl-phosphate (acyl-PO(4)) from acyl-[acyl-carrier-protein] (acyl-ACP). This enzyme utilizes acyl-ACP as fatty acyl donor, but not acyl-CoA. In Clostridium perfringens (strain 13 / Type A), this protein is Putative phosphate acyltransferase.